A 576-amino-acid polypeptide reads, in one-letter code: RING finger and SPRY domain-containing protein 1 (576 aa).

A signal peptide spans 1 to 16; sequence MIVLGWAVFLASRSLG. S50 bears the Phosphoserine mark. The interval 50-99 is disordered; that stretch reads SGTDDSVDTQQQQAENSAVPTADTRSQPRDPVRPPRRGRGPHEPRRKKQN. Residues 57 to 68 are compositionally biased toward polar residues; that stretch reads DTQQQQAENSAV. Residues 83–97 are compositionally biased toward basic residues; that stretch reads PPRRGRGPHEPRRKK. The 184-residue stretch at 300 to 483 folds into the B30.2/SPRY domain; it reads LFLKEGRQLT…CEFNFGAKPF (184 aa). N-linked (GlcNAc...) asparagine glycosylation is present at N314. The segment at 527 to 562 adopts an RING-type zinc-finger fold; it reads CSLCCDEVADTQLKPCGHSDLCMDCALQLETCPLCR.

It localises to the secreted. The chain is RING finger and SPRY domain-containing protein 1 (RSPRY1) from Macaca fascicularis (Crab-eating macaque).